A 260-amino-acid chain; its full sequence is Vesicle-associated membrane protein/synaptobrevin-binding protein (260 aa).

The Cytoplasmic segment spans residues 1–238 (MASHEQALIL…SPAPAAAVRA (238 aa)). The region spanning 7–125 (ALILEPAGEL…MDTKLRCVFE (119 aa)) is the MSP domain. The tract at residues 127 to 177 (PDGSHQAPASDASRATDAGAHFSESALEDPTVASRKTETQSPKRVGAVGSA) is disordered. A coiled-coil region spans residues 172–216 (GAVGSAGEDVKKLQHELKKAQSEITSLKGENSQLKDEGIRLRKVA). Residues 239-259 (FPPVVYVVAAIILGLIIGKFL) traverse the membrane as a helical; Anchor for type IV membrane protein segment.

The protein belongs to the VAMP-associated protein (VAP) (TC 9.B.17) family. Detected only in the central nervous system and the gill of aplysia.

The protein resides in the membrane. The protein localises to the synapse. Its subcellular location is the synaptosome. Its function is as follows. Required for neurotransmitter release. Interacts with VAMP. The chain is Vesicle-associated membrane protein/synaptobrevin-binding protein from Aplysia californica (California sea hare).